Consider the following 516-residue polypeptide: 2,3-bisphosphoglycerate-independent phosphoglycerate mutase (516 aa).

Positions 14 and 64 each coordinate Mn(2+). Ser-64 functions as the Phosphoserine intermediate in the catalytic mechanism. Substrate contacts are provided by residues His-125, 155–156, Arg-187, Arg-193, 263–266, and Lys-337; these read RD and RPDR. Mn(2+) contacts are provided by Asp-404, His-408, Asp-445, His-446, and His-464.

This sequence belongs to the BPG-independent phosphoglycerate mutase family. In terms of assembly, monomer. Mn(2+) serves as cofactor.

It catalyses the reaction (2R)-2-phosphoglycerate = (2R)-3-phosphoglycerate. The protein operates within carbohydrate degradation; glycolysis; pyruvate from D-glyceraldehyde 3-phosphate: step 3/5. Functionally, catalyzes the interconversion of 2-phosphoglycerate and 3-phosphoglycerate. The chain is 2,3-bisphosphoglycerate-independent phosphoglycerate mutase from Saccharophagus degradans (strain 2-40 / ATCC 43961 / DSM 17024).